Consider the following 561-residue polypeptide: Long-chain-fatty-acid--CoA ligase (561 aa).

ATP is bound at residue 213–224 (YTGGTTGVAKGA).

This sequence belongs to the ATP-dependent AMP-binding enzyme family. It depends on Mg(2+) as a cofactor.

The protein localises to the membrane. It carries out the reaction a long-chain fatty acid + ATP + CoA = a long-chain fatty acyl-CoA + AMP + diphosphate. It functions in the pathway lipid metabolism; fatty acid beta-oxidation. Functionally, catalyzes the esterification, concomitant with transport, of exogenous long-chain fatty acids into metabolically active CoA thioesters for subsequent degradation or incorporation into phospholipids. The protein is Long-chain-fatty-acid--CoA ligase (fadD) of Escherichia coli O6:H1 (strain CFT073 / ATCC 700928 / UPEC).